We begin with the raw amino-acid sequence, 198 residues long: Holliday junction branch migration complex subunit RuvA (198 aa).

The segment at 1-61 (MTLYKIGEIV…DYIQQTYGFK (61 aa)) is domain I. The tract at residues 62-139 (TFKERLLFTD…KIIQNKEVKK (78 aa)) is domain II. The tract at residues 140-144 (FDDIT) is flexible linker. Positions 144 to 198 (TNIKELKQTLNKLGFKASDIDYAVNNISSTKELDLMVEESINLITTQMHANNQTT) are domain III.

The protein belongs to the RuvA family. As to quaternary structure, homotetramer. Forms an RuvA(8)-RuvB(12)-Holliday junction (HJ) complex. HJ DNA is sandwiched between 2 RuvA tetramers; dsDNA enters through RuvA and exits via RuvB. An RuvB hexamer assembles on each DNA strand where it exits the tetramer. Each RuvB hexamer is contacted by two RuvA subunits (via domain III) on 2 adjacent RuvB subunits; this complex drives branch migration. In the full resolvosome a probable DNA-RuvA(4)-RuvB(12)-RuvC(2) complex forms which resolves the HJ.

It is found in the cytoplasm. In terms of biological role, the RuvA-RuvB-RuvC complex processes Holliday junction (HJ) DNA during genetic recombination and DNA repair, while the RuvA-RuvB complex plays an important role in the rescue of blocked DNA replication forks via replication fork reversal (RFR). RuvA specifically binds to HJ cruciform DNA, conferring on it an open structure. The RuvB hexamer acts as an ATP-dependent pump, pulling dsDNA into and through the RuvAB complex. HJ branch migration allows RuvC to scan DNA until it finds its consensus sequence, where it cleaves and resolves the cruciform DNA. In Mycoplasmopsis synoviae (strain 53) (Mycoplasma synoviae), this protein is Holliday junction branch migration complex subunit RuvA.